Here is a 253-residue protein sequence, read N- to C-terminus: MITNTAAYQFAPIHDPQQLADSVLERAQQRALKGSVLVAEEGINLFLAGDAEQIASFYAWLHADARFAQMRVKYSHSAEQPFARLKVKVKPEIISFRRDDASPLQGRAPSVAPAVLRKWMQQGHDDHGRPLVLLDTRNAQEVAYGTFQGALTLPIDKFTELPEALQPHRAALADATVVSFCTGGIRCEKAALWMHAEGMDNVLQLEGGILGYFEDVGGEGYDGRCFVFDERVALDAELRPLVDGAACADAGKI.

A Rhodanese domain is found at 127 to 221; that stretch reads HGRPLVLLDT…YFEDVGGEGY (95 aa). Catalysis depends on cysteine 181, which acts as the Cysteine persulfide intermediate.

This sequence belongs to the TrhO family.

The enzyme catalyses uridine(34) in tRNA + AH2 + O2 = 5-hydroxyuridine(34) in tRNA + A + H2O. Its function is as follows. Catalyzes oxygen-dependent 5-hydroxyuridine (ho5U) modification at position 34 in tRNAs. This chain is tRNA uridine(34) hydroxylase, found in Xanthomonas campestris pv. campestris (strain 8004).